Consider the following 276-residue polypeptide: Putative translation initiation factor eIF-2B subunit 2-like (276 aa).

This sequence belongs to the eIF-2B alpha/beta/delta subunits family. As to quaternary structure, complex of two different subunits.

Its function is as follows. Catalyzes the exchange of initiation factor 2-bound GDP for GTP. This Pyrococcus furiosus (strain ATCC 43587 / DSM 3638 / JCM 8422 / Vc1) protein is Putative translation initiation factor eIF-2B subunit 2-like.